Reading from the N-terminus, the 230-residue chain is Ureidoacrylate amidohydrolase RutB (230 aa).

The active-site Proton acceptor is Asp24. The active site involves Lys133. Cys166 (nucleophile) is an active-site residue.

This sequence belongs to the isochorismatase family. RutB subfamily.

It catalyses the reaction (Z)-3-ureidoacrylate + H2O + H(+) = (Z)-3-aminoacrylate + NH4(+) + CO2. The enzyme catalyses (Z)-3-ureidoacrylate + H2O = (Z)-3-aminoacrylate + carbamate + H(+). It carries out the reaction (Z)-2-methylureidoacrylate + H2O + H(+) = (Z)-2-methylaminoacrylate + NH4(+) + CO2. Its function is as follows. Hydrolyzes ureidoacrylate to form aminoacrylate and carbamate. The carbamate hydrolyzes spontaneously, thereby releasing one of the nitrogen atoms of the pyrimidine ring as ammonia and one of its carbon atoms as CO2. In Escherichia coli O111:H- (strain 11128 / EHEC), this protein is Ureidoacrylate amidohydrolase RutB.